A 146-amino-acid polypeptide reads, in one-letter code: MILSNLKPVPGARHSKKRLGRGPGSGTGKTSGKGHKGQKARSGGGVRPGFEGGQIPFFQRIPKRGFNNHTRVEYAIVNTKELNVFEDGTVVTPELLLQTKLVSKVLAGVKILADGKLEKKLTVKANKFSNSAKEAIEAAGGTIEVI.

Residues Met1–Gly53 form a disordered region. Gly residues-rich tracts occupy residues Arg21–Ser31 and Ser42–Gly52.

The protein belongs to the universal ribosomal protein uL15 family. As to quaternary structure, part of the 50S ribosomal subunit.

Functionally, binds to the 23S rRNA. This Acholeplasma laidlawii (strain PG-8A) protein is Large ribosomal subunit protein uL15.